The following is a 464-amino-acid chain: Fumarate hydratase class II (464 aa).

Residues 98–100, 129–132, 139–141, and T187 each bind substrate; these read SGT, HPND, and SSN. The active-site Proton donor/acceptor is the H188. Residue S318 is part of the active site. Substrate is bound by residues S319 and 324-326; that span reads KVN.

Belongs to the class-II fumarase/aspartase family. Fumarase subfamily. As to quaternary structure, homotetramer.

It localises to the cytoplasm. It carries out the reaction (S)-malate = fumarate + H2O. Its pathway is carbohydrate metabolism; tricarboxylic acid cycle; (S)-malate from fumarate: step 1/1. Its function is as follows. Involved in the TCA cycle. Catalyzes the stereospecific interconversion of fumarate to L-malate. The protein is Fumarate hydratase class II of Haemophilus ducreyi (strain 35000HP / ATCC 700724).